A 497-amino-acid polypeptide reads, in one-letter code: Phenylalanine--tRNA ligase alpha subunit (497 aa).

Residues T329, 372–374, and Y412 contribute to the L-phenylalanine site; that span reads QIE. A Mg(2+)-binding site is contributed by E414. F438 contacts L-phenylalanine.

It belongs to the class-II aminoacyl-tRNA synthetase family. Phe-tRNA synthetase alpha subunit type 2 subfamily. As to quaternary structure, heterotetramer; dimer of two heterodimers formed by alpha and beta subunits. The cofactor is Mg(2+).

The protein localises to the cytoplasm. It carries out the reaction tRNA(Phe) + L-phenylalanine + ATP = L-phenylalanyl-tRNA(Phe) + AMP + diphosphate + H(+). The sequence is that of Phenylalanine--tRNA ligase alpha subunit (farsa) from Danio rerio (Zebrafish).